The primary structure comprises 819 residues: Sulfate permease 2 (819 aa).

Residue N24 is glycosylated (N-linked (GlcNAc...) asparagine). 10 helical membrane-spanning segments follow: residues 72-92 (YNLTWLLGDFIAGVTVGFVVV), 104-124 (LAPEYGLYTSFVGFVLYWAFA), 129-149 (ITIGAVAVMSTIVGNIIANVQ), 172-192 (LLFLGLIRFGFIVEFIPIVAI), 194-214 (AFMTGSAISIAAGQVSTLMGI), 273-293 (FFVSTLRMVFIIILYILVSWL), 328-348 (ILSAISGDIPTTILVLLIEHI), 365-385 (SQELVAIGFTNLLGPFLGGYP), 454-474 (FWLTSPLEVVIFFAGVFVSIF), and 477-497 (IENGIYVTVAASGAVLLWRIA). The STAS domain occupies 551–708 (ELQISTPWPG…ENHKGGVQEV (158 aa)). N581 carries N-linked (GlcNAc...) asparagine glycosylation. Residues 726–766 (EAVPVGTSGSGSTDEKRPEGEGGATNGGMEKGSANGEDIST) form a disordered region. A compositionally biased stretch (gly residues) spans 746–755 (EGGATNGGME).

It belongs to the SLC26A/SulP transporter (TC 2.A.53) family. In terms of tissue distribution, mainly found in mycelia.

It localises to the membrane. Functionally, uptake of sulfate into the cell. This is Sulfate permease 2 (cys-14) from Neurospora crassa (strain ATCC 24698 / 74-OR23-1A / CBS 708.71 / DSM 1257 / FGSC 987).